A 255-amino-acid chain; its full sequence is Acetylglutamate kinase (255 aa).

Residues Gly40 to Gly41, Arg62, and Asn153 contribute to the substrate site.

The protein belongs to the acetylglutamate kinase family. ArgB subfamily.

It is found in the cytoplasm. It carries out the reaction N-acetyl-L-glutamate + ATP = N-acetyl-L-glutamyl 5-phosphate + ADP. The protein operates within amino-acid biosynthesis; L-arginine biosynthesis; N(2)-acetyl-L-ornithine from L-glutamate: step 2/4. Catalyzes the ATP-dependent phosphorylation of N-acetyl-L-glutamate. The protein is Acetylglutamate kinase of Bacillus cereus (strain ATCC 10987 / NRS 248).